The primary structure comprises 63 residues: Translational regulator CsrA (63 aa).

This sequence belongs to the CsrA/RsmA family. As to quaternary structure, homodimer; the beta-strands of each monomer intercalate to form a hydrophobic core, while the alpha-helices form wings that extend away from the core.

It is found in the cytoplasm. Its function is as follows. A key translational regulator that binds mRNA to regulate translation initiation and/or mRNA stability. Mediates global changes in gene expression, shifting from rapid growth to stress survival by linking envelope stress, the stringent response and the catabolite repression systems. Usually binds in the 5'-UTR; binding at or near the Shine-Dalgarno sequence prevents ribosome-binding, repressing translation, binding elsewhere in the 5'-UTR can activate translation and/or stabilize the mRNA. Its function is antagonized by small RNA(s). The polypeptide is Translational regulator CsrA (Alteromonas mediterranea (strain DSM 17117 / CIP 110805 / LMG 28347 / Deep ecotype)).